A 487-amino-acid chain; its full sequence is MRETKEQPIWYGKVFSSNWVEARGGVANVVDPSNGDILGITGVANGEDVDAAVNAAKRAQKEWAAIPFSERAAIVRKAAEKLKEREYEFADWNVRECGAIRPKGLWEAGIAYEQMHQAAGLASLPNGTLFPSAVPGRMNLCQRVPVGVVGVIAPWNFPLFLAMRSVAPALALGNAVILKPDLQTAVTGGALIAEIFSDAGMPDGVLHVLPGGADVGESMVANSGINMISFTGSTQVGRLIGEKCGRMLKKVALELGGNNVHIVLPDADLEGAVSCAAWGTFLHQGQVCMAAGRHLVHRDVAQQYAEKLALRAKNLVVGDPNSDQVHLGPLINEKQVVRVHALVESAQRAGAQVLAGGTYQDRYYQATVIMDVKPEMEVFKSEIFGPVAPITVFDSIEEAIELANCSEYGLAASIHTRALATGLDIAKRLNTGMVHINDQPINCEPHVPFGGMGASGSGGRFGGPASIEEFTQSQWISMVEKPANYPF.

232–237 (GSTQVG) provides a ligand contact to NAD(+). Residues E254 and C288 contribute to the active site.

Belongs to the aldehyde dehydrogenase family. Homotetramer.

The enzyme catalyses benzaldehyde + NAD(+) + H2O = benzoate + NADH + 2 H(+). This Pseudomonas putida (Arthrobacter siderocapsulatus) protein is Benzaldehyde dehydrogenase [NAD(+)] (xylC).